Reading from the N-terminus, the 752-residue chain is Probable GTP-binding protein OBGC1, chloroplastic (752 aa).

The transit peptide at 1–90 (MAPAVAVVAA…RFPTANPEPR (90 aa)) directs the protein to the chloroplast. Residues 19–121 (FSAEARRNTK…EEDEVELGLR (103 aa)) are disordered. Residues 26-36 (NTKGSRSKRGS) show a composition bias toward basic residues. Over residues 103 to 117 (GDDEEDEEEEEDEVE) the composition is skewed to acidic residues. Residues 294-452 (MRCFDTAKIY…MWIDLELKLV (159 aa)) form the Obg domain. The region spanning 453–621 (ADVGIVGAPN…VVLAAYKVLQ (169 aa)) is the OBG-type G domain. Residues 459 to 466 (GAPNAGKS), 484 to 488 (FTTLL), 506 to 509 (DLPG), 573 to 576 (NKMD), and 602 to 604 (SAM) contribute to the GTP site. Positions 466 and 486 each coordinate Mg(2+). Residues 649-728 (ERRAPMNEFE…VGEMEMVWTD (80 aa)) form the OCT domain. The tract at residues 728–752 (DEPSKTRSSKTMNSKDDSVRWPEFG) is disordered. A compositionally biased stretch (basic and acidic residues) spans 740–752 (NSKDDSVRWPEFG).

The protein belongs to the TRAFAC class OBG-HflX-like GTPase superfamily. OBG GTPase family. It depends on Mg(2+) as a cofactor.

The protein localises to the plastid. The protein resides in the chloroplast. Probable GTP-binding protein that may play a role in chloroplast development. In Oryza sativa subsp. indica (Rice), this protein is Probable GTP-binding protein OBGC1, chloroplastic (OBGC1).